The following is a 154-amino-acid chain: Photosystem II extrinsic protein U, chloroplastic (154 aa).

The N-terminal 36 residues, 1–36 (MAFISTPLGKVTVKSATVSANRRGLRMQSDSEPVVS), are a transit peptide targeting the chloroplast. The N-terminal 25 residues, 37–61 (RRALLSGALAAAVAAALARARPAQA), are a transit peptide targeting the thylakoid.

Belongs to the PsbU family. PSII is composed of 1 copy each of membrane proteins PsbA, PsbB, PsbC, PsbD, PsbE, PsbF, PsbH, PsbI, PsbJ, PsbK, PsbL, PsbM, PsbT, PsbY, PsbZ, Psb30/Ycf12, at least 3 peripheral proteins of the oxygen-evolving complex and a large number of cofactors. It forms dimeric complexes. The extrinsic subunits in red algae are PsbO (OEC33), PsbQ', cytochrome c-550 and PsbU. Post-translationally, predicted to be translocated into the thylakoid lumen by the Tat system. The position of the first transit peptide cleavage has not been experimentally proven.

The protein localises to the plastid. Its subcellular location is the chloroplast thylakoid membrane. Functionally, one of the extrinsic, lumenal subunits of photosystem II (PSII). PSII is a light-driven water plastoquinone oxidoreductase, using light energy to abstract electrons from H(2)O, generating a proton gradient subsequently used for ATP formation. The extrinsic proteins stabilize the structure of photosystem II oxygen-evolving complex (OEC), the ion environment of oxygen evolution and protect the OEC against heat-induced inactivation. The polypeptide is Photosystem II extrinsic protein U, chloroplastic (Cyanidium caldarium (Red alga)).